The chain runs to 247 residues: tRNA pseudouridine synthase A (247 aa).

Residue Asp52 is the Nucleophile of the active site. Tyr110 serves as a coordination point for substrate.

Belongs to the tRNA pseudouridine synthase TruA family. Homodimer.

The catalysed reaction is uridine(38/39/40) in tRNA = pseudouridine(38/39/40) in tRNA. In terms of biological role, formation of pseudouridine at positions 38, 39 and 40 in the anticodon stem and loop of transfer RNAs. This Hyphomonas neptunium (strain ATCC 15444) protein is tRNA pseudouridine synthase A.